Reading from the N-terminus, the 812-residue chain is MLKNKSMKTSKLYVIKRDGRQEEVHFDKITSRIQKLCYNLNMDFVDPVTITLQVINGLYCGVTTQELDNLAAEIAAGLTCNHPDYAILAARIAVSNLHKETKKAFSDVFEDLYNHVNKETNQKVPLVSEFHYNVVKKNATRLNSSIIYDRDFGYNYFGFKTLERSYLLKRNGKIAERPQHMLMRVAIGIHGEDIDAAVETYNLLSERYFTHASPTLFAAATNRPQLSSCFLLTMTADSIEGIFKSVEQCAMISKSAGGIGLNVHCIRAKGTSICGTNGTSNGLVPMLRVFNNVARYVDQGGGKRPGAFAIYLEPWHSDVFEFLELKKNTGKEENRARDLFYALWIPDLFMKRVEANGDWSLMCPHKCPGLHDVWGDEFEKLYEKYEQEGRANRTVKAQSLWFAIIEAQVETGNPYMLFKDACNRKSNQQNVGTIKCSNLCTEIVEYSAPDEIAVCNLASIALNMFVTPEKTYDFKKLKEVTKIVTKNLNKIIDINYYPLPEARKSNLRHRPVGIGIQGFADALILMRFPYESEEAGLLNQQIFETIYYGALEASCELAQTEGPYETYEGSPVSKGILQYDMWDKVPTNLWDWQKLKESIRMHGVRNSLLVAPMPTASTAQIMGNNESFEPYTTNIYTRRVLSGEFQVVNHHLLRDLTELDLWDDDMKNQIISSRGSIQNIETIPPKVRDLYKTVWEISVKSTIKMAADRGAFIDQSQSFNIHVAEPNYGKLTSIHFYSWKAGLKTGMYYLRTKPAANAIQFTVNKKQGAVSMNGQNGTAEGSPQKYEEDRERKMADMVCSLENKDACMSCGS.

The region spanning 12–103 is the ATP-cone domain; the sequence is LYVIKRDGRQ…VSNLHKETKK (92 aa). Residues 16–17, 22–28, threonine 64, and aspartate 68 each bind ATP; these read KR and EEVHFDK. GDP is bound by residues serine 213 and serine 228. A disulfide bridge links cysteine 229 with cysteine 455. Residues 237 to 239, lysine 254, arginine 267, and 274 to 275 contribute to the dTTP site; these read DSI and CG. Asparagine 438 lines the GDP pocket. Catalysis depends on asparagine 438, which acts as the Proton acceptor. The active-site Cysteine radical intermediate is the cysteine 440. GDP contacts are provided by residues glutamate 442 and 615 to 618; that span reads TAST. Glutamate 442 acts as the Proton acceptor in catalysis. Threonine 778 carries the post-translational modification Phosphothreonine. A Phosphoserine modification is found at serine 782. Phosphotyrosine is present on tyrosine 786.

It belongs to the ribonucleoside diphosphate reductase large chain family. In terms of assembly, heterodimer of a large and a small subunit.

It carries out the reaction a 2'-deoxyribonucleoside 5'-diphosphate + [thioredoxin]-disulfide + H2O = a ribonucleoside 5'-diphosphate + [thioredoxin]-dithiol. Its activity is regulated as follows. Under complex allosteric control mediated by deoxynucleoside triphosphates and ATP binding to separate specificity and activation sites on the M1 subunit. The type of nucleotide bound at the specificity site determines substrate preference. It seems probable that ATP makes the enzyme reduce CDP and UDP, dGTP favors ADP reduction and dTTP favors GDP reduction. Stimulated by ATP and inhibited by dATP binding to the activity site. Functionally, provides the precursors necessary for DNA synthesis. Catalyzes the biosynthesis of deoxyribonucleotides from the corresponding ribonucleotides. The polypeptide is Ribonucleoside-diphosphate reductase large subunit (RnrL) (Drosophila melanogaster (Fruit fly)).